The primary structure comprises 304 residues: Non-specific ribonucleoside hydrolase RihC (304 aa).

Histidine 233 is a catalytic residue.

It belongs to the IUNH family. RihC subfamily.

In terms of biological role, hydrolyzes both purine and pyrimidine ribonucleosides with a broad-substrate specificity. This Escherichia coli O17:K52:H18 (strain UMN026 / ExPEC) protein is Non-specific ribonucleoside hydrolase RihC.